A 213-amino-acid polypeptide reads, in one-letter code: Probable transaldolase (213 aa).

The active-site Schiff-base intermediate with substrate is the Lys-83.

This sequence belongs to the transaldolase family. Type 3B subfamily.

The protein localises to the cytoplasm. The catalysed reaction is D-sedoheptulose 7-phosphate + D-glyceraldehyde 3-phosphate = D-erythrose 4-phosphate + beta-D-fructose 6-phosphate. Its pathway is carbohydrate degradation; pentose phosphate pathway; D-glyceraldehyde 3-phosphate and beta-D-fructose 6-phosphate from D-ribose 5-phosphate and D-xylulose 5-phosphate (non-oxidative stage): step 2/3. Transaldolase is important for the balance of metabolites in the pentose-phosphate pathway. The sequence is that of Probable transaldolase from Geobacillus thermodenitrificans (strain NG80-2).